Consider the following 117-residue polypeptide: Large ribosomal subunit protein uL22 (117 aa).

It belongs to the universal ribosomal protein uL22 family. As to quaternary structure, part of the 50S ribosomal subunit.

This protein binds specifically to 23S rRNA; its binding is stimulated by other ribosomal proteins, e.g. L4, L17, and L20. It is important during the early stages of 50S assembly. It makes multiple contacts with different domains of the 23S rRNA in the assembled 50S subunit and ribosome. Functionally, the globular domain of the protein is located near the polypeptide exit tunnel on the outside of the subunit, while an extended beta-hairpin is found that lines the wall of the exit tunnel in the center of the 70S ribosome. This Lactobacillus delbrueckii subsp. bulgaricus (strain ATCC 11842 / DSM 20081 / BCRC 10696 / JCM 1002 / NBRC 13953 / NCIMB 11778 / NCTC 12712 / WDCM 00102 / Lb 14) protein is Large ribosomal subunit protein uL22.